Reading from the N-terminus, the 169-residue chain is Type II secretion system protein H (169 aa).

Residues 1–29 constitute a propeptide, leader sequence; it reads MRVARLPLLHPHRAAPVVRRQLRGSSLLE. An N-methylmethionine modification is found at Met30. The helical transmembrane segment at 32-52 threads the bilayer; sequence LVIALIALAGVLAAAALTGGI.

The protein belongs to the GSP H family. Type II secretion is composed of four main components: the outer membrane complex, the inner membrane complex, the cytoplasmic secretion ATPase and the periplasm-spanning pseudopilus. Interacts with core component XpsG. Interacts with minor pseudopilins XpsI and XpsJ. Cleaved by prepilin peptidase. Post-translationally, methylated by prepilin peptidase at the amino group of the N-terminal phenylalanine once the leader sequence is cleaved by prepilin peptidase.

It localises to the cell inner membrane. Its function is as follows. Component of the type II secretion system required for the energy-dependent secretion of extracellular factors such as proteases and toxins from the periplasm. Part of the pseudopilus tip complex that is critical for the recognition and binding of secretion substrates. This chain is Type II secretion system protein H (xpsH), found in Xanthomonas campestris pv. campestris (strain ATCC 33913 / DSM 3586 / NCPPB 528 / LMG 568 / P 25).